A 248-amino-acid polypeptide reads, in one-letter code: Small ribosomal subunit protein eS1 (248 aa).

Positions 1-21 (MAVGKDKRISKGKKGGKKKIV) are disordered.

This sequence belongs to the eukaryotic ribosomal protein eS1 family. In terms of assembly, component of the small ribosomal subunit. Mature ribosomes consist of a small (40S) and a large (60S) subunit. The 40S subunit contains about 33 different proteins and 1 molecule of RNA (18S). The 60S subunit contains about 49 different proteins and 3 molecules of RNA (25S, 5.8S and 5S).

It is found in the cytoplasm. This Syntrichia ruralis (Great hairy screw-moss) protein is Small ribosomal subunit protein eS1.